The chain runs to 296 residues: Sulfotransferase 1E1 (296 aa).

Residue 49–54 participates in 3'-phosphoadenylyl sulfate binding; sequence KSGTTW. Residue 107-109 participates in substrate binding; it reads KTH. H109 (proton acceptor) is an active-site residue. 3'-phosphoadenylyl sulfate-binding positions include R131, S139, Y194, 228 to 233, and 258 to 260; these read TSFQEM and RKG.

It belongs to the sulfotransferase 1 family. Homodimer. The N-terminus is blocked. As to expression, adrenal gland and much less in liver. Detectable only during pregnancy in uterine.

It is found in the cytoplasm. It localises to the cytosol. It carries out the reaction estrone + 3'-phosphoadenylyl sulfate = estrone 3-sulfate + adenosine 3',5'-bisphosphate + H(+). The enzyme catalyses (24S)-hydroxycholesterol + 3'-phosphoadenylyl sulfate = (24S)-hydroxycholesterol 3-sulfate + adenosine 3',5'-bisphosphate + H(+). The catalysed reaction is 17beta-estradiol + 3'-phosphoadenylyl sulfate = 17beta-estradiol 3-sulfate + adenosine 3',5'-bisphosphate + H(+). It catalyses the reaction 3beta-hydroxyandrost-5-en-17-one + 3'-phosphoadenylyl sulfate = dehydroepiandrosterone 3-sulfate + adenosine 3',5'-bisphosphate + H(+). It carries out the reaction 4-ethylphenol + 3'-phosphoadenylyl sulfate = 4-ethylphenyl sulfate + adenosine 3',5'-bisphosphate + H(+). Inhibited by estradiol. Functionally, sulfotransferase that utilizes 3'-phospho-5'-adenylyl sulfate (PAPS) as sulfonate donor to catalyze the sulfate conjugation of estradiol and estrone. Is a key enzyme in estrogen homeostasis, the sulfation of estrogens leads to their inactivation. Also sulfates dehydroepiandrosterone (DHEA), pregnenolone, (24S)-hydroxycholesteroland xenobiotic compounds like ethinylestradiol, equalenin, diethyl stilbesterol and 1-naphthol at significantly lower efficiency. Does not sulfonate cortisol, testosterone and dopamine. May play a role in gut microbiota-host metabolic interaction. O-sulfonates 4-ethylphenol (4-EP), a dietary tyrosine-derived metabolite produced by gut bacteria. The product 4-EPS crosses the blood-brain barrier and may negatively regulate oligodendrocyte maturation and myelination, affecting the functional connectivity of different brain regions associated with the limbic system. This Cavia porcellus (Guinea pig) protein is Sulfotransferase 1E1 (SULT1E1).